Reading from the N-terminus, the 451-residue chain is Serine--tRNA ligase (451 aa).

258 to 260 (TSE) provides a ligand contact to L-serine. 289–291 (RSE) provides a ligand contact to ATP. An L-serine-binding site is contributed by Glu-312. 376 to 379 (EISS) is a binding site for ATP. Ser-411 contacts L-serine.

The protein belongs to the class-II aminoacyl-tRNA synthetase family. Type-1 seryl-tRNA synthetase subfamily. In terms of assembly, homodimer. The tRNA molecule binds across the dimer.

It is found in the cytoplasm. It catalyses the reaction tRNA(Ser) + L-serine + ATP = L-seryl-tRNA(Ser) + AMP + diphosphate + H(+). The catalysed reaction is tRNA(Sec) + L-serine + ATP = L-seryl-tRNA(Sec) + AMP + diphosphate + H(+). It functions in the pathway aminoacyl-tRNA biosynthesis; selenocysteinyl-tRNA(Sec) biosynthesis; L-seryl-tRNA(Sec) from L-serine and tRNA(Sec): step 1/1. Catalyzes the attachment of serine to tRNA(Ser). Is also able to aminoacylate tRNA(Sec) with serine, to form the misacylated tRNA L-seryl-tRNA(Sec), which will be further converted into selenocysteinyl-tRNA(Sec). The protein is Serine--tRNA ligase of Bordetella pertussis (strain Tohama I / ATCC BAA-589 / NCTC 13251).